Here is an 82-residue protein sequence, read N- to C-terminus: Small ribosomal subunit protein eS27 (82 aa).

The segment at 37 to 59 adopts a C4-type zinc-finger fold; the sequence is CPGCFTITTVFSHAQTVVICQGC.

It belongs to the eukaryotic ribosomal protein eS27 family. As to quaternary structure, component of the small ribosomal subunit (SSU). Mature N.crassa ribosomes consist of a small (40S) and a large (60S) subunit. The 40S small subunit contains 1 molecule of ribosomal RNA (18S rRNA) and at least 32 different proteins. The large 60S subunit contains 3 rRNA molecules (26S, 5.8S and 5S rRNA) and at least 42 different proteins. Zn(2+) serves as cofactor.

It localises to the cytoplasm. Functionally, component of the ribosome, a large ribonucleoprotein complex responsible for the synthesis of proteins in the cell. The small ribosomal subunit (SSU) binds messenger RNAs (mRNAs) and translates the encoded message by selecting cognate aminoacyl-transfer RNA (tRNA) molecules. The large subunit (LSU) contains the ribosomal catalytic site termed the peptidyl transferase center (PTC), which catalyzes the formation of peptide bonds, thereby polymerizing the amino acids delivered by tRNAs into a polypeptide chain. The nascent polypeptides leave the ribosome through a tunnel in the LSU and interact with protein factors that function in enzymatic processing, targeting, and the membrane insertion of nascent chains at the exit of the ribosomal tunnel. This is Small ribosomal subunit protein eS27 (crp-6) from Neurospora crassa (strain ATCC 24698 / 74-OR23-1A / CBS 708.71 / DSM 1257 / FGSC 987).